A 391-amino-acid polypeptide reads, in one-letter code: NAD(P)H-quinone oxidoreductase subunit H, chloroplastic (391 aa).

It belongs to the complex I 49 kDa subunit family. NDH is composed of at least 16 different subunits, 5 of which are encoded in the nucleus.

It is found in the plastid. Its subcellular location is the chloroplast thylakoid membrane. It catalyses the reaction a plastoquinone + NADH + (n+1) H(+)(in) = a plastoquinol + NAD(+) + n H(+)(out). It carries out the reaction a plastoquinone + NADPH + (n+1) H(+)(in) = a plastoquinol + NADP(+) + n H(+)(out). NDH shuttles electrons from NAD(P)H:plastoquinone, via FMN and iron-sulfur (Fe-S) centers, to quinones in the photosynthetic chain and possibly in a chloroplast respiratory chain. The immediate electron acceptor for the enzyme in this species is believed to be plastoquinone. Couples the redox reaction to proton translocation, and thus conserves the redox energy in a proton gradient. The sequence is that of NAD(P)H-quinone oxidoreductase subunit H, chloroplastic from Physcomitrium patens (Spreading-leaved earth moss).